Here is a 780-residue protein sequence, read N- to C-terminus: Calpain clp-1 (780 aa).

Residues 269–282 show a composition bias toward basic and acidic residues; the sequence is DVDPFVRPGPDPDR. The disordered stretch occupies residues 269–300; that stretch reads DVDPFVRPGPDPDRGGGGSGPSPISPRPTTEP. Residues 316–611 enclose the Calpain catalytic domain; that stretch reads LFEDPQFLAN…FEKMEICNLG (296 aa). Active-site residues include Cys-371, His-527, and Asn-551.

The protein belongs to the peptidase C2 family. As to expression, expressed in muscle and neuronal tissues. Expressed in the ventral and dorsal nerve cord, intestinal and hypodermal tissues.

Its subcellular location is the cytoplasm. The protein resides in the myofibril. It is found in the sarcomere. It localises to the m line. Its function is as follows. Calcium-regulated non-lysosomal thiol-protease which catalyzes limited proteolysis of substrates. Required for assembly and maintenance of integrin attachment complexes which are essential for maintenance of adult muscle. Proteolytic activity is activated in response to increased intracellular Ca(2+) levels during cell degeneration and promotes necrotic cell death. The polypeptide is Calpain clp-1 (Caenorhabditis elegans).